A 359-amino-acid polypeptide reads, in one-letter code: snRNA-activating protein complex subunit 2 (359 aa).

Residues 1–11 (MKPPQRRRRVP) show a composition bias toward basic residues. Disordered regions lie at residues 1-22 (MKPP…TGPT), 157-221 (NQDG…GSST), and 291-327 (TALP…SEPI).

In terms of assembly, part of the SNAPc complex composed of 5 subunits: SNAPC1, SNAPC2, SNAPC3, SNAPC4 and SNAPC5. SNAPC2 interacts with TBP and SNAPC4.

Its subcellular location is the nucleus. Its function is as follows. Part of the SNAPc complex required for the transcription of both RNA polymerase II and III small-nuclear RNA genes. Binds to the proximal sequence element (PSE), a non-TATA-box basal promoter element common to these 2 types of genes. Recruits TBP and BRF2 to the U6 snRNA TATA box. This is snRNA-activating protein complex subunit 2 (Snapc2) from Mus musculus (Mouse).